The sequence spans 223 residues: Serine/threonine/tyrosine-interacting protein (223 aa).

The Tyrosine-protein phosphatase domain maps to 28–176 (EMQEILPGLF…LQEYEAIYLA (149 aa)). An Interaction with FBXW7 motif is present at residues 76–78 (FQQ). Residues S184, S193, and S201 each carry the phosphoserine modification. The segment at 197–223 (GTTGSLKRTHEEEDDFGTMQVATAQNG) is disordered.

It belongs to the protein-tyrosine phosphatase family. Non-receptor class subfamily. In terms of assembly, interacts with MAPK1; independently of MAPK1 phosphorylation status. Interacts with CARHSP1/Crhsp-24. Interacts (via FQQ motif) with FBXW7 (via F-box domain); the interaction is direct and prevents FBXW7 interaction with SKP1, a component of the SCF(FBXW7) complex.

The protein resides in the nucleus. The protein localises to the cytoplasm. It localises to the cytosol. In terms of biological role, catalytically inactive phosphatase. Acts as a nuclear anchor for MAPK1/MAPK3 (ERK1/ERK2). Modulates cell-fate decisions and cell migration by spatiotemporal regulation of MAPK1/MAPK3 (ERK1/ERK2). By binding to the F-box of FBXW7, prevents the assembly of FBXW7 into the SCF E3 ubiquitin-protein ligase complex, and thereby inhibits degradation of its substrates. Plays a role in spermatogenesis. In Pongo abelii (Sumatran orangutan), this protein is Serine/threonine/tyrosine-interacting protein (STYX).